The chain runs to 426 residues: Histidine--tRNA ligase (426 aa).

It belongs to the class-II aminoacyl-tRNA synthetase family. In terms of assembly, homodimer.

It is found in the cytoplasm. The enzyme catalyses tRNA(His) + L-histidine + ATP = L-histidyl-tRNA(His) + AMP + diphosphate + H(+). The chain is Histidine--tRNA ligase from Streptococcus agalactiae serotype III (strain NEM316).